Consider the following 179-residue polypeptide: Large ribosomal subunit protein uL5 (179 aa).

It belongs to the universal ribosomal protein uL5 family. As to quaternary structure, part of the 50S ribosomal subunit; part of the 5S rRNA/L5/L18/L25 subcomplex. Contacts the 5S rRNA and the P site tRNA. Forms a bridge to the 30S subunit in the 70S ribosome.

In terms of biological role, this is one of the proteins that bind and probably mediate the attachment of the 5S RNA into the large ribosomal subunit, where it forms part of the central protuberance. In the 70S ribosome it contacts protein S13 of the 30S subunit (bridge B1b), connecting the 2 subunits; this bridge is implicated in subunit movement. Contacts the P site tRNA; the 5S rRNA and some of its associated proteins might help stabilize positioning of ribosome-bound tRNAs. In Herpetosiphon aurantiacus (strain ATCC 23779 / DSM 785 / 114-95), this protein is Large ribosomal subunit protein uL5.